A 351-amino-acid polypeptide reads, in one-letter code: UPF0104 membrane protein MTH_887 (351 aa).

8 helical membrane-spanning segments follow: residues Ile-20–Phe-40, Ser-51–Leu-71, Val-137–Trp-157, Ile-165–Gly-185, Phe-244–Val-264, Ala-275–Pro-295, Ile-304–Val-324, and Ile-328–Gln-348.

It belongs to the UPF0104 family.

Its subcellular location is the cell membrane. The chain is UPF0104 membrane protein MTH_887 from Methanothermobacter thermautotrophicus (strain ATCC 29096 / DSM 1053 / JCM 10044 / NBRC 100330 / Delta H) (Methanobacterium thermoautotrophicum).